The sequence spans 105 residues: uncharacterized protein (105 aa).

An N-terminal signal peptide occupies residues 1–24 (MYWPCLVITPFTVGESFCLLLSLG).

This is an uncharacterized protein from Saccharomyces cerevisiae (strain ATCC 204508 / S288c) (Baker's yeast).